A 430-amino-acid polypeptide reads, in one-letter code: Terminal nucleotidyltransferase 5B (430 aa).

Residues 1–46 (MMPSESETESRDRAAAQVGTAAAAAVAKAAPAGGGPDPEASSASLG) form a disordered region. The span at 15-44 (AAQVGTAAAAAVAKAAPAGGGPDPEASSAS) shows a compositional bias: low complexity.

This sequence belongs to the TENT family.

Its subcellular location is the cytoplasm. It is found in the nucleus. The enzyme catalyses RNA(n) + ATP = RNA(n)-3'-adenine ribonucleotide + diphosphate. Its function is as follows. Catalyzes the transfer of one adenosine molecule from an ATP to an mRNA poly(A) tail bearing a 3'-OH terminal group in an ATP hydrolysis-dependent manner. May be involved in maintaining the translation efficiency of at least some genes through preventing degradation of their mRNAs. Prefers RNA molecules that are adenosine-rich close to 3'-end. In addition, may inhibit cell proliferation and cell cycle progression through ubiquitination of beta-catenin/CTNNB1. This chain is Terminal nucleotidyltransferase 5B, found in Bos taurus (Bovine).